Reading from the N-terminus, the 277-residue chain is 2-dehydro-3-deoxyphosphooctonate aldolase (277 aa).

This sequence belongs to the KdsA family.

The protein resides in the cytoplasm. It catalyses the reaction D-arabinose 5-phosphate + phosphoenolpyruvate + H2O = 3-deoxy-alpha-D-manno-2-octulosonate-8-phosphate + phosphate. It functions in the pathway carbohydrate biosynthesis; 3-deoxy-D-manno-octulosonate biosynthesis; 3-deoxy-D-manno-octulosonate from D-ribulose 5-phosphate: step 2/3. The protein operates within bacterial outer membrane biogenesis; lipopolysaccharide biosynthesis. In Brucella abortus (strain S19), this protein is 2-dehydro-3-deoxyphosphooctonate aldolase.